The primary structure comprises 369 residues: Ubiquinone biosynthesis O-methyltransferase, mitochondrial (369 aa).

A mitochondrion-targeting transit peptide spans 1-85 (MWSGRKLGSS…SFRYPWARLY (85 aa)). Arg-124 contacts S-adenosyl-L-methionine. Lys-143 and Lys-149 each carry N6-acetyllysine. S-adenosyl-L-methionine-binding residues include Gly-154 and Asp-175. N6-acetyllysine is present on Lys-196. Ser-222 contributes to the S-adenosyl-L-methionine binding site. Residues Glu-223, Glu-226, and His-227 each coordinate Mg(2+).

This sequence belongs to the class I-like SAM-binding methyltransferase superfamily. UbiG/COQ3 family. In terms of assembly, component of a multi-subunit COQ enzyme complex, composed of at least COQ3, COQ4, COQ5, COQ6, COQ7 and COQ9. Requires Mg(2+) as cofactor.

It localises to the mitochondrion inner membrane. It carries out the reaction 3,4-dihydroxy-5-(all-trans-decaprenyl)benzoate + S-adenosyl-L-methionine = 4-hydroxy-3-methoxy-5-(all-trans-decaprenyl)benzoate + S-adenosyl-L-homocysteine + H(+). The enzyme catalyses a 3-demethylubiquinone + S-adenosyl-L-methionine = a ubiquinone + S-adenosyl-L-homocysteine. The catalysed reaction is 3-demethylubiquinol-10 + S-adenosyl-L-methionine = ubiquinol-10 + S-adenosyl-L-homocysteine + H(+). Its pathway is cofactor biosynthesis; ubiquinone biosynthesis. Its function is as follows. O-methyltransferase required for two non-consecutive steps during ubiquinone biosynthesis. Catalyzes the 2 O-methylation of 3,4-dihydroxy-5-(all-trans-decaprenyl)benzoic acid into 4-hydroxy-3-methoxy-5-(all-trans-decaprenyl)benzoic acid. Also catalyzes the last step of ubiquinone biosynthesis by mediating methylation of 3-demethylubiquinone into ubiquinone. Also able to mediate the methylation of 3-demethylubiquinol-10 into ubiquinol-10. This is Ubiquinone biosynthesis O-methyltransferase, mitochondrial from Homo sapiens (Human).